The following is a 323-amino-acid chain: Lipid A biosynthesis acyltransferase 1 (323 aa).

The helical transmembrane segment at 23-43 (YWGAWLGVAAMAGIALTPPKF) threads the bilayer. Residues 139 to 144 (HGWAVD) carry the HXXXXD motif motif.

Belongs to the LpxL/LpxM/LpxP family. LpxM subfamily.

It localises to the cell inner membrane. It carries out the reaction an alpha-Kdo-(2-&gt;4)-alpha-Kdo-(2-&gt;6)-(acyl)-lipid IVA + a fatty acyl-[ACP] = an alpha-Kdo-(2-&gt;4)-alpha-Kdo-(2-&gt;6)-lipid A + holo-[ACP]. It functions in the pathway glycolipid biosynthesis; KDO(2)-lipid A biosynthesis; KDO(2)-lipid A from CMP-3-deoxy-D-manno-octulosonate and lipid IV(A): step 4/4. The protein operates within bacterial outer membrane biogenesis; lipopolysaccharide biosynthesis. Its function is as follows. Catalyzes the transfer of an acyl chain from an acyl-[acyl-carrier-protein] (ACP) to a Kdo(2)-(acyl)-lipid IV(A) to form a Kdo(2)-lipid A. The polypeptide is Lipid A biosynthesis acyltransferase 1 (Shigella flexneri).